The sequence spans 303 residues: N-acetyl-D-glucosamine kinase (303 aa).

Residues glycine 4–lysine 11 and glycine 133–phenylalanine 140 contribute to the ATP site. 4 residues coordinate Zn(2+): histidine 157, cysteine 177, cysteine 179, and cysteine 184.

This sequence belongs to the ROK (NagC/XylR) family. NagK subfamily.

It carries out the reaction N-acetyl-D-glucosamine + ATP = N-acetyl-D-glucosamine 6-phosphate + ADP + H(+). The protein operates within cell wall biogenesis; peptidoglycan recycling. Its function is as follows. Catalyzes the phosphorylation of N-acetyl-D-glucosamine (GlcNAc) derived from cell-wall degradation, yielding GlcNAc-6-P. The sequence is that of N-acetyl-D-glucosamine kinase from Escherichia fergusonii (strain ATCC 35469 / DSM 13698 / CCUG 18766 / IAM 14443 / JCM 21226 / LMG 7866 / NBRC 102419 / NCTC 12128 / CDC 0568-73).